The sequence spans 566 residues: Glutamate--tRNA ligase (566 aa).

Positions 93 to 103 match the 'HIGH' region motif; that stretch reads PNPDYTIHLGN.

Belongs to the class-I aminoacyl-tRNA synthetase family. Glutamate--tRNA ligase type 2 subfamily.

The protein localises to the cytoplasm. The enzyme catalyses tRNA(Glu) + L-glutamate + ATP = L-glutamyl-tRNA(Glu) + AMP + diphosphate. In terms of biological role, catalyzes the attachment of glutamate to tRNA(Glu) in a two-step reaction: glutamate is first activated by ATP to form Glu-AMP and then transferred to the acceptor end of tRNA(Glu). The polypeptide is Glutamate--tRNA ligase (Staphylothermus marinus (strain ATCC 43588 / DSM 3639 / JCM 9404 / F1)).